A 229-amino-acid polypeptide reads, in one-letter code: Ribose-5-phosphate isomerase A (229 aa).

Substrate is bound by residues 28-31 (TGST), 85-88 (DGAD), and 98-101 (KGRG). E107 acts as the Proton acceptor in catalysis. K125 is a substrate binding site.

The protein belongs to the ribose 5-phosphate isomerase family. Homotetramer.

The enzyme catalyses aldehydo-D-ribose 5-phosphate = D-ribulose 5-phosphate. It participates in carbohydrate degradation; pentose phosphate pathway; D-ribose 5-phosphate from D-ribulose 5-phosphate (non-oxidative stage): step 1/1. Its activity is regulated as follows. Inhibited by D-4-phosphoerythronic acid. Involved in the first step of the non-oxidative branch of the pentose phosphate pathway. It catalyzes the reversible conversion of ribose-5-phosphate to ribulose 5-phosphate. This Pyrococcus horikoshii (strain ATCC 700860 / DSM 12428 / JCM 9974 / NBRC 100139 / OT-3) protein is Ribose-5-phosphate isomerase A.